We begin with the raw amino-acid sequence, 405 residues long: Acetate kinase (405 aa).

Asparagine 7 lines the Mg(2+) pocket. Residue lysine 14 coordinates ATP. A substrate-binding site is contributed by arginine 90. Aspartate 147 acts as the Proton donor/acceptor in catalysis. Residues 207–211, 282–284, and 331–335 each bind ATP; these read HLGNG, DFR, and GVGEN. Glutamate 384 is a Mg(2+) binding site.

Belongs to the acetokinase family. Homodimer. The cofactor is Mg(2+). Requires Mn(2+) as cofactor.

It localises to the cytoplasm. The catalysed reaction is acetate + ATP = acetyl phosphate + ADP. Its pathway is metabolic intermediate biosynthesis; acetyl-CoA biosynthesis; acetyl-CoA from acetate: step 1/2. In terms of biological role, catalyzes the formation of acetyl phosphate from acetate and ATP. Can also catalyze the reverse reaction. The chain is Acetate kinase from Clostridium kluyveri (strain ATCC 8527 / DSM 555 / NBRC 12016 / NCIMB 10680 / K1).